The sequence spans 171 residues: 3-hydroxydecanoyl-[acyl-carrier-protein] dehydratase (171 aa).

His70 is a catalytic residue.

It belongs to the thioester dehydratase family. FabA subfamily. As to quaternary structure, homodimer.

The protein resides in the cytoplasm. It catalyses the reaction a (3R)-hydroxyacyl-[ACP] = a (2E)-enoyl-[ACP] + H2O. The enzyme catalyses (3R)-hydroxydecanoyl-[ACP] = (2E)-decenoyl-[ACP] + H2O. The catalysed reaction is (2E)-decenoyl-[ACP] = (3Z)-decenoyl-[ACP]. The protein operates within lipid metabolism; fatty acid biosynthesis. In terms of biological role, necessary for the introduction of cis unsaturation into fatty acids. Catalyzes the dehydration of (3R)-3-hydroxydecanoyl-ACP to E-(2)-decenoyl-ACP and then its isomerization to Z-(3)-decenoyl-ACP. Can catalyze the dehydratase reaction for beta-hydroxyacyl-ACPs with saturated chain lengths up to 16:0, being most active on intermediate chain length. The chain is 3-hydroxydecanoyl-[acyl-carrier-protein] dehydratase from Pseudomonas syringae pv. syringae (strain B728a).